We begin with the raw amino-acid sequence, 163 residues long: MAKIKKIFTNFLRLLALAATVVAIVFMVTSHDSAQVLNLTFTVKYSNTPVFKYFVIAEAIAGGYIVISILLSFKSLFWRLLVILDMVTAVLLTSSISAALAIAQVGKKGNTHAGWLPVCEQVPDFCDQVTIALIAGFAAAIIYFVLLLCSLYVVLSPIFVVTP.

At 1 to 6 (MAKIKK) the chain is on the cytoplasmic side. Residues 7-27 (IFTNFLRLLALAATVVAIVFM) traverse the membrane as a helical segment. The Extracellular portion of the chain corresponds to 28–52 (VTSHDSAQVLNLTFTVKYSNTPVFK). Asn38 carries an N-linked (GlcNAc...) asparagine glycan. Residues 53-73 (YFVIAEAIAGGYIVISILLSF) form a helical membrane-spanning segment. Over 74–79 (KSLFWR) the chain is Cytoplasmic. A helical transmembrane segment spans residues 80–100 (LLVILDMVTAVLLTSSISAAL). Residues 101-128 (AIAQVGKKGNTHAGWLPVCEQVPDFCDQ) are Extracellular-facing. The helical transmembrane segment at 129 to 149 (VTIALIAGFAAAIIYFVLLLC) threads the bilayer. At 150-163 (SLYVVLSPIFVVTP) the chain is on the cytoplasmic side.

Belongs to the Casparian strip membrane proteins (CASP) family. As to quaternary structure, homodimer and heterodimers.

It localises to the cell membrane. This is CASP-like protein 1C3 from Populus trichocarpa (Western balsam poplar).